The following is a 66-amino-acid chain: Stress-associated endoplasmic reticulum protein 1 (66 aa).

Residues 1–33 (MVAKQRIRMANEKHSKNITQRGNVAKTSRNAPG) are disordered. The Cytoplasmic portion of the chain corresponds to 1–38 (MVAKQRIRMANEKHSKNITQRGNVAKTSRNAPGEKASV). Residues 17–30 (NITQRGNVAKTSRN) show a composition bias toward polar residues. A helical transmembrane segment spans residues 39–59 (GPWLLALFIFVVCGSAIFQII). Residues 60–66 (QSIRMGM) are Extracellular-facing.

The protein belongs to the RAMP4 family. Interacts with SEC61B, SEC61A1 and the SEC61 complex. Interacts with CANX.

Its subcellular location is the membrane. The protein localises to the endoplasmic reticulum membrane. Interacts with target proteins during their translocation into the lumen of the endoplasmic reticulum. Protects unfolded target proteins against degradation during ER stress. May facilitate glycosylation of target proteins after termination of ER stress. May modulate the use of N-glycosylation sites on target proteins. This Pongo abelii (Sumatran orangutan) protein is Stress-associated endoplasmic reticulum protein 1 (SERP1).